The chain runs to 224 residues: LexA repressor (224 aa).

Residues 31–51 constitute a DNA-binding region (H-T-H motif); the sequence is RAEIAAELGFKSANAAEEHLQ. Active-site for autocatalytic cleavage activity residues include S142 and K179.

Belongs to the peptidase S24 family. As to quaternary structure, homodimer.

It carries out the reaction Hydrolysis of Ala-|-Gly bond in repressor LexA.. Its function is as follows. Represses a number of genes involved in the response to DNA damage (SOS response), including recA and lexA. In the presence of single-stranded DNA, RecA interacts with LexA causing an autocatalytic cleavage which disrupts the DNA-binding part of LexA, leading to derepression of the SOS regulon and eventually DNA repair. The sequence is that of LexA repressor from Verminephrobacter eiseniae (strain EF01-2).